The chain runs to 517 residues: MLRFLAPRLLSLQGRTARYSSAAALPSPILNPDIPYNQLFINNEWQDAVSKKTFPTVNPTTGEVIGHVAEGDRADVDRAVKAAREAFRLGSPWRRMDASERGRLLNCLADLVERDRVYLASLETLDNGKPFQESYALDLDEVIKVYRYFAGWADKWHGKTIPMDGQHFCFTRHEPIGVCGQIIPWNFPLVMQGWKLAPALATGNTVVMKVAEQTPLSALYLASLIKEAGFPPGVVNIITGYGPTAGAAIAQHMDVDKVAFTGSTEVGHLIQKAAGDSNLKRVTLELGGKSPSIVLADADMEHAVEQCHEALFFNMGQCCCAGSRTFVEESIYNEFLERTVEKAKQRKVGNPFELDTQQGPQVDKEQFERVLGYIQLGQKEGAKLLCGGERFGERGFFIKPTVFGGVQDDMRIAKEEIFGPVQPLFKFKKMEEVIERANTTRYGLAAAVFTRDLDKAMYFTQALQAGTVWVNTYNIVTCHTPFGGFKESGNGRELGEDGLKAYTEVKTVTIKVPQKNS.

Residues 1 to 17 constitute a mitochondrion transit peptide; that stretch reads MLRFLAPRLLSLQGRTA. The residue at position 51 (Lys51) is an N6-acetyllysine. Lys52 bears the N6-acetyllysine; alternate mark. Lys52 is modified (N6-succinyllysine; alternate). Lys81 is modified (N6-succinyllysine). 262–267 contributes to the NAD(+) binding site; it reads GSTEVG. The active-site Proton acceptor is Glu285. Cys319 functions as the Nucleophile in the catalytic mechanism. Lys364, Lys383, Lys399, Lys414, and Lys426 each carry N6-acetyllysine; alternate. Lys364, Lys383, Lys399, Lys414, and Lys426 each carry N6-succinyllysine; alternate. An N6-acetyllysine modification is found at Lys429.

The protein belongs to the aldehyde dehydrogenase family. As to quaternary structure, homotetramer.

The protein resides in the mitochondrion matrix. It carries out the reaction an aldehyde + NAD(+) + H2O = a carboxylate + NADH + 2 H(+). The protein operates within alcohol metabolism; ethanol degradation; acetate from ethanol: step 2/2. Functionally, ALDHs play a major role in the detoxification of alcohol-derived acetaldehyde. They are involved in the metabolism of corticosteroids, biogenic amines, neurotransmitters, and lipid peroxidation. The sequence is that of Aldehyde dehydrogenase X, mitochondrial (ALDH1B1) from Pongo abelii (Sumatran orangutan).